The following is a 174-amino-acid chain: ATP-dependent protease subunit HslV (174 aa).

The active site involves Thr2. 3 residues coordinate Na(+): Gly157, Cys160, and Thr163.

It belongs to the peptidase T1B family. HslV subfamily. A double ring-shaped homohexamer of HslV is capped on each side by a ring-shaped HslU homohexamer. The assembly of the HslU/HslV complex is dependent on binding of ATP.

Its subcellular location is the cytoplasm. It catalyses the reaction ATP-dependent cleavage of peptide bonds with broad specificity.. Its activity is regulated as follows. Allosterically activated by HslU binding. In terms of biological role, protease subunit of a proteasome-like degradation complex believed to be a general protein degrading machinery. The chain is ATP-dependent protease subunit HslV from Cellvibrio japonicus (strain Ueda107) (Pseudomonas fluorescens subsp. cellulosa).